A 166-amino-acid chain; its full sequence is Ureidoglycolate lyase (166 aa).

This sequence belongs to the ureidoglycolate lyase family. As to quaternary structure, homodimer. Ni(2+) is required as a cofactor.

The enzyme catalyses (S)-ureidoglycolate = urea + glyoxylate. It functions in the pathway nitrogen metabolism; (S)-allantoin degradation. Catalyzes the catabolism of the allantoin degradation intermediate (S)-ureidoglycolate, generating urea and glyoxylate. Involved in the utilization of allantoin as nitrogen source. The sequence is that of Ureidoglycolate lyase from Agrobacterium fabrum (strain C58 / ATCC 33970) (Agrobacterium tumefaciens (strain C58)).